The chain runs to 137 residues: Putative transcription elongation factor S-II-like protein 055R (137 aa).

The TFIIS-type zinc-finger motif lies at Asp85 to Thr136. Residues Cys89, Cys103, Cys128, and Cys131 each contribute to the Zn(2+) site.

Belongs to the IIV-6 349L family.

The polypeptide is Putative transcription elongation factor S-II-like protein 055R (Aedes vexans (Inland floodwater mosquito)).